The sequence spans 239 residues: Ribosomal RNA small subunit methyltransferase G (239 aa).

Residues Gly-78, Phe-83, Ala-129 to Glu-130, and Arg-148 contribute to the S-adenosyl-L-methionine site.

Belongs to the methyltransferase superfamily. RNA methyltransferase RsmG family.

It is found in the cytoplasm. Functionally, specifically methylates the N7 position of a guanine in 16S rRNA. This Clostridium botulinum (strain Alaska E43 / Type E3) protein is Ribosomal RNA small subunit methyltransferase G.